Here is a 267-residue protein sequence, read N- to C-terminus: Small ribosomal subunit protein uS2c (267 aa).

The interval 237–267 (KQKIKKTGVKISGNRRTSSITKKRNPASSKI) is disordered. The span at 250–267 (NRRTSSITKKRNPASSKI) shows a compositional bias: polar residues.

This sequence belongs to the universal ribosomal protein uS2 family.

The protein resides in the plastid. Its subcellular location is the chloroplast. In Chlorella vulgaris (Green alga), this protein is Small ribosomal subunit protein uS2c (rps2).